The primary structure comprises 225 residues: uncharacterized protein (225 aa).

This is an uncharacterized protein from Ureaplasma parvum serovar 3 (strain ATCC 700970).